The sequence spans 74 residues: MAGFSKVIATIFLMMMLVFATGMVAEARTCESQSHRFKGLCFSKSNCGSVCHTEGFNGGHCRGFRRRCFCTRHC.

A signal peptide spans 1-27 (MAGFSKVIATIFLMMMLVFATGMVAEA). Intrachain disulfides connect cysteine 30-cysteine 74, cysteine 41-cysteine 61, cysteine 47-cysteine 68, and cysteine 51-cysteine 70.

Belongs to the DEFL family. In terms of assembly, monomer. Expressed in flowers and in young fruits.

The protein localises to the secreted. Plant defense peptide with antifungal activity against F.oxysporum and B.cinerea. This chain is Defensin J1-2, found in Capsicum annuum (Capsicum pepper).